The sequence spans 131 residues: Small ribosomal subunit protein uS8c (131 aa).

It belongs to the universal ribosomal protein uS8 family. Part of the 30S ribosomal subunit.

It localises to the plastid. It is found in the chloroplast. In terms of biological role, one of the primary rRNA binding proteins, it binds directly to 16S rRNA central domain where it helps coordinate assembly of the platform of the 30S subunit. The polypeptide is Small ribosomal subunit protein uS8c (rps8) (Tupiella akineta (Green alga)).